We begin with the raw amino-acid sequence, 279 residues long: Probable diacylglycerol pyrophosphate phosphatase 1 (279 aa).

At 1-17 the chain is on the lumenal side; the sequence is MEAVGKHVKLFWNVYSD. A helical membrane pass occupies residues 18 to 38; the sequence is YAVLIAISLSYFVFDVLMLPF. The Cytoplasmic segment spans residues 39–58; sequence TRQFSLEDITISHPFALHEQ. The helical transmembrane segment at 59 to 79 threads the bilayer; it reads VPTKYLGIICVFFPALVLYGF. The Lumenal portion of the chain corresponds to 80-86; it reads GKLRNNS. The helical transmembrane segment at 87–107 threads the bilayer; it reads LLFWKSLMGLLYSTMVCGLCV. At 108–163 the chain is on the cytoplasmic side; the sequence is SLLKNAVGRPRPDFLARCQPFESTPKTGLVDVLSCSVPWSDKVLQDGFRSFPSGHT. The segment at 111-119 is phosphatase sequence motif I; the sequence is KNAVGRPRP. Residues 159 to 162 form a phosphatase sequence motif II region; sequence PSGH. Residues 164–184 form a helical membrane-spanning segment; the sequence is SFSFAGLGFLAIFLAGQLKMF. Over 185-187 the chain is Lumenal; it reads RNK. Residues 188-208 form a helical membrane-spanning segment; the sequence is TSSWKVVVPLVPLSIASWIGL. Topologically, residues 209–220 are cytoplasmic; the sequence is SRSQDYRHHKED. The interval 209 to 220 is phosphatase sequence motif III; that stretch reads SRSQDYRHHKED. Residues 221-241 traverse the membrane as a helical segment; the sequence is IAVGALFGFAIAYVVYRQLFP. At 242 to 279 the chain is on the lumenal side; that stretch reads PLDHHNADILYVQAELDEGYTNVHSAGNSSATNAEQMV.

Belongs to the PA-phosphatase related phosphoesterase family.

It is found in the vacuole membrane. It localises to the endoplasmic reticulum membrane. The catalysed reaction is a 1,2-diacyl-sn-glycerol 3-diphosphate + H2O = a 1,2-diacyl-sn-glycero-3-phosphate + phosphate + H(+). It carries out the reaction a 1,2-diacyl-sn-glycero-3-phosphate + H2O = a 1,2-diacyl-sn-glycerol + phosphate. In terms of biological role, catalyzes the dephosphorylation of diacylglycerol phosphate (DGPP) to phosphatidate (PA) and the subsequent dephosphorylation of PA to diacylglycerol (DAG). In Schizosaccharomyces pombe (strain 972 / ATCC 24843) (Fission yeast), this protein is Probable diacylglycerol pyrophosphate phosphatase 1 (dpp1).